Here is a 260-residue protein sequence, read N- to C-terminus: Ditrans,polycis-undecaprenyl-diphosphate synthase ((2E,6E)-farnesyl-diphosphate specific) (260 aa).

The active site involves Asp-20. Asp-20 is a binding site for Mg(2+). Residues 21 to 24 (GNGR), Trp-25, Arg-33, His-37, and 65 to 67 (SSE) each bind substrate. The Proton acceptor role is filled by Asn-68. The substrate site is built by Trp-69, Arg-71, and Arg-188. His-193 is a binding site for Mg(2+). A substrate-binding site is contributed by 194–196 (RIS). Glu-207 contributes to the Mg(2+) binding site.

Belongs to the UPP synthase family. Homodimer. Mg(2+) serves as cofactor.

It carries out the reaction 8 isopentenyl diphosphate + (2E,6E)-farnesyl diphosphate = di-trans,octa-cis-undecaprenyl diphosphate + 8 diphosphate. Functionally, catalyzes the sequential condensation of isopentenyl diphosphate (IPP) with (2E,6E)-farnesyl diphosphate (E,E-FPP) to yield (2Z,6Z,10Z,14Z,18Z,22Z,26Z,30Z,34E,38E)-undecaprenyl diphosphate (di-trans,octa-cis-UPP). UPP is the precursor of glycosyl carrier lipid in the biosynthesis of bacterial cell wall polysaccharide components such as peptidoglycan and lipopolysaccharide. The chain is Ditrans,polycis-undecaprenyl-diphosphate synthase ((2E,6E)-farnesyl-diphosphate specific) from Wigglesworthia glossinidia brevipalpis.